The chain runs to 513 residues: ATP synthase subunit alpha (513 aa).

G170–T177 contributes to the ATP binding site.

This sequence belongs to the ATPase alpha/beta chains family. In terms of assembly, F-type ATPases have 2 components, CF(1) - the catalytic core - and CF(0) - the membrane proton channel. CF(1) has five subunits: alpha(3), beta(3), gamma(1), delta(1), epsilon(1). CF(0) has three main subunits: a(1), b(2) and c(9-12). The alpha and beta chains form an alternating ring which encloses part of the gamma chain. CF(1) is attached to CF(0) by a central stalk formed by the gamma and epsilon chains, while a peripheral stalk is formed by the delta and b chains.

It is found in the cell inner membrane. It carries out the reaction ATP + H2O + 4 H(+)(in) = ADP + phosphate + 5 H(+)(out). Produces ATP from ADP in the presence of a proton gradient across the membrane. The alpha chain is a regulatory subunit. In Teredinibacter turnerae (strain ATCC 39867 / T7901), this protein is ATP synthase subunit alpha.